We begin with the raw amino-acid sequence, 78 residues long: Acyl carrier protein (78 aa).

Residues 2–77 form the Carrier domain; the sequence is SDTVERVKKI…DAVKFIDKAS (76 aa). S37 carries the post-translational modification O-(pantetheine 4'-phosphoryl)serine.

It belongs to the acyl carrier protein (ACP) family. 4'-phosphopantetheine is transferred from CoA to a specific serine of apo-ACP by AcpS. This modification is essential for activity because fatty acids are bound in thioester linkage to the sulfhydryl of the prosthetic group.

It is found in the cytoplasm. It participates in lipid metabolism; fatty acid biosynthesis. Its function is as follows. Carrier of the growing fatty acid chain in fatty acid biosynthesis. In Bartonella henselae (strain ATCC 49882 / DSM 28221 / CCUG 30454 / Houston 1) (Rochalimaea henselae), this protein is Acyl carrier protein.